Reading from the N-terminus, the 284-residue chain is Bifunctional protein FolD (284 aa).

NADP(+) is bound by residues 166 to 168, Ser-191, and Ile-232; that span reads GAS.

Belongs to the tetrahydrofolate dehydrogenase/cyclohydrolase family. As to quaternary structure, homodimer.

The enzyme catalyses (6R)-5,10-methylene-5,6,7,8-tetrahydrofolate + NADP(+) = (6R)-5,10-methenyltetrahydrofolate + NADPH. It carries out the reaction (6R)-5,10-methenyltetrahydrofolate + H2O = (6R)-10-formyltetrahydrofolate + H(+). Its pathway is one-carbon metabolism; tetrahydrofolate interconversion. Catalyzes the oxidation of 5,10-methylenetetrahydrofolate to 5,10-methenyltetrahydrofolate and then the hydrolysis of 5,10-methenyltetrahydrofolate to 10-formyltetrahydrofolate. The chain is Bifunctional protein FolD from Neisseria meningitidis serogroup B (strain ATCC BAA-335 / MC58).